The following is a 940-amino-acid chain: Protein translocase subunit SecA (940 aa).

Residues glutamine 87, 105–109 (GEGKT), and aspartate 494 each bind ATP. Positions 879–940 (AQQQKKAVEG…KCHGASEASV (62 aa)) are disordered. Over residues 884-898 (KAVEGRATADGKLDE) the composition is skewed to basic and acidic residues. A compositionally biased stretch (low complexity) spans 900-915 (SVAAAARPAAASRPAV). Zn(2+) is bound by residues cysteine 921, cysteine 923, cysteine 932, and histidine 933.

It belongs to the SecA family. In terms of assembly, monomer and homodimer. Part of the essential Sec protein translocation apparatus which comprises SecA, SecYEG and auxiliary proteins SecDF-YajC and YidC. Zn(2+) is required as a cofactor.

The protein resides in the cell inner membrane. The protein localises to the cytoplasm. It catalyses the reaction ATP + H2O + cellular proteinSide 1 = ADP + phosphate + cellular proteinSide 2.. Functionally, part of the Sec protein translocase complex. Interacts with the SecYEG preprotein conducting channel. Has a central role in coupling the hydrolysis of ATP to the transfer of proteins into and across the cell membrane, serving as an ATP-driven molecular motor driving the stepwise translocation of polypeptide chains across the membrane. The protein is Protein translocase subunit SecA of Myxococcus xanthus (strain DK1622).